The sequence spans 400 residues: MGKAKKVVLAYSGGVDTSVCIPYLKKEYGVEHVIAFAADLGQGDELDQIKQKAISAGASESLIGNLVKPFIEDFAFPAIRSNALYQGRYPLSTALARPLIAKNLVEIARELNADGVAHGCTGKGNDQVRFDVTIGALAPDLQLLTPAREWGMSREETIAYGEKYGIVPPVSKKTPYSIDLNLLGRSIEAGPLEDPFEMPSEEVFGITSSIADSPNEPEIVDILFENGYPVAINGEAMEPVSLIKKANSLAGKHGFGRLDIIEDRVVGIKSREIYETPGLLLLIKAHQEIESLTLPADLLDTKFRLERQWADLVYKGFWFSPLKEALDGFINYSQKQVNGTVRVRLFKGNVDVIGRKSKENSLYISDMSTYGSEDKFNHKSAEGFIYVWGLPSRIWSWINK.

ATP is bound by residues 10 to 18 (AYSGGVDTS) and Ala38. An L-citrulline-binding site is contributed by Tyr89. Gly119 provides a ligand contact to ATP. L-aspartate is bound by residues Thr121, Asn125, and Asp126. Asn125 contacts L-citrulline. 5 residues coordinate L-citrulline: Arg129, Ser177, Ser186, Glu262, and Tyr274.

This sequence belongs to the argininosuccinate synthase family. Type 1 subfamily. As to quaternary structure, homotetramer.

The protein localises to the cytoplasm. It catalyses the reaction L-citrulline + L-aspartate + ATP = 2-(N(omega)-L-arginino)succinate + AMP + diphosphate + H(+). Its pathway is amino-acid biosynthesis; L-arginine biosynthesis; L-arginine from L-ornithine and carbamoyl phosphate: step 2/3. The chain is Argininosuccinate synthase from Prochlorococcus marinus (strain NATL1A).